The primary structure comprises 876 residues: Alanine--tRNA ligase (876 aa).

Positions 562, 566, 666, and 670 each coordinate Zn(2+).

The protein belongs to the class-II aminoacyl-tRNA synthetase family. It depends on Zn(2+) as a cofactor.

It is found in the cytoplasm. It catalyses the reaction tRNA(Ala) + L-alanine + ATP = L-alanyl-tRNA(Ala) + AMP + diphosphate. Catalyzes the attachment of alanine to tRNA(Ala) in a two-step reaction: alanine is first activated by ATP to form Ala-AMP and then transferred to the acceptor end of tRNA(Ala). Also edits incorrectly charged Ser-tRNA(Ala) and Gly-tRNA(Ala) via its editing domain. This chain is Alanine--tRNA ligase, found in Hahella chejuensis (strain KCTC 2396).